The sequence spans 706 residues: Cyclic nucleotide-gated channel alpha-3 (706 aa).

At 1 to 189 (MAKISTQYSH…MDPSSNMYYH (189 aa)) the chain is on the cytoplasmic side. Positions 113 to 177 (RESHVQFNVG…PKKEEKKKDS (65 aa)) are disordered. The span at 147 to 177 (SEKDDKAKKEEKEKKEEKKENPKKEEKKKDS) shows a compositional bias: basic and acidic residues. A helical transmembrane segment spans residues 190-211 (WLTVIAVPVFYNWCLLVCRACF). The Extracellular portion of the chain corresponds to 212-217 (DELQSE). The helical transmembrane segment at 218 to 238 (HLMLWLVLDYSADILYGMDML) threads the bilayer. Over 239–265 (VRARTGFLEQGLMVMDASRLWKHYTQT) the chain is Cytoplasmic. Residues 266–285 (LHFKLDVLSLVPTDLAYFKL) traverse the membrane as a helical segment. Residues 286 to 289 (GMNY) are Extracellular-facing. The chain crosses the membrane as a helical span at residues 290-307 (PELRFNRLLKLARLFEFF). The Cytoplasmic portion of the chain corresponds to 308–317 (DRTETRTNYP). Residues 317–425 (PNMFRIGNLV…GNVGSMISNM (109 aa)) are ion conduction pathway. A helical membrane pass occupies residues 318–340 (NMFRIGNLVLYILIIIHWNACIY). At 341-366 (FAISKFIGFGTDSWVYPNVSNPEYGR) the chain is on the extracellular side. Asn358 is a glycosylation site (N-linked (GalNAc...) asparagine). The next 2 membrane-spanning stretches (helical) occupy residues 367–397 (LSRK…DEEY) and 398–422 (LFVV…GSMI). Residues 384 to 387 (TIGE) form a selectivity filter region. Topologically, residues 423–706 (SNMNASRAEF…DAPQTEASQP (284 aa)) are cytoplasmic. The segment at 427–504 (ASRAEFQAKI…TLRKVRIFQD (78 aa)) is C-linker. Residues 507–627 (AGLLVELVLK…EEKGRQILMK (121 aa)) are cyclic nucleotide-binding domain. 3',5'-cyclic GMP-binding residues include Gly567, Glu568, Ser570, Arg583, Thr584, and Asp628. Residues 645–688 (IEEKVEHLETSLDSLQTRFARLLAEYNATQMKVKQRLSQLESQV) are a coiled coil. The segment at 685 to 706 (ESQVKMGLPPDGDAPQTEASQP) is disordered.

Belongs to the cyclic nucleotide-gated cation channel (TC 1.A.1.5) family. CNGA3 subfamily. Forms heterotetrameric channels composed of CNGA3 and CNGB3 subunits with 3:1 stoichiometry. As to expression, testis, kidney, retinal cone (at protein level) and heart.

It is found in the cell membrane. It catalyses the reaction Ca(2+)(in) = Ca(2+)(out). It carries out the reaction Na(+)(in) = Na(+)(out). The enzyme catalyses K(+)(in) = K(+)(out). The catalysed reaction is NH4(+)(in) = NH4(+)(out). It catalyses the reaction Rb(+)(in) = Rb(+)(out). It carries out the reaction Li(+)(in) = Li(+)(out). The enzyme catalyses Cs(+)(in) = Cs(+)(out). With respect to regulation, ca(2+) influx is inhibited by extracellular Mg(2+) ions. In terms of biological role, pore-forming subunit of the cone cyclic nucleotide-gated channel. Mediates cone photoresponses at bright light converting transient changes in intracellular cGMP levels into electrical signals. In the dark, cGMP levels are high and keep the channel open enabling a steady inward current carried by Na(+) and Ca(2+) ions that leads to membrane depolarization and neurotransmitter release from synaptic terminals. Upon photon absorption cGMP levels decline leading to channel closure and membrane hyperpolarization that ultimately slows neurotransmitter release and signals the presence of light, the end point of the phototransduction cascade. Pore-forming subunit of the gustatory cyclic nucleotide-gated channel. In the taste buds, may sense oral extracellular pH and conduct ion currents that modulate the excitability of taste cells. Conducts cGMP- and cAMP-gated ion currents, with permeability for monovalent and divalent cations. The sequence is that of Cyclic nucleotide-gated channel alpha-3 from Bos taurus (Bovine).